The sequence spans 159 residues: Large ribosomal subunit protein uL22 (159 aa).

Belongs to the universal ribosomal protein uL22 family. As to quaternary structure, part of the 50S ribosomal subunit.

Its function is as follows. This protein binds specifically to 23S rRNA. It makes multiple contacts with different domains of the 23S rRNA in the assembled 50S subunit and ribosome. In terms of biological role, the globular domain of the protein is located near the polypeptide exit tunnel on the outside of the subunit, while an extended beta-hairpin is found that lines the wall of the exit tunnel in the center of the 70S ribosome. This Methanopyrus kandleri (strain AV19 / DSM 6324 / JCM 9639 / NBRC 100938) protein is Large ribosomal subunit protein uL22.